Consider the following 332-residue polypeptide: Hygromycin-B 7''-O-kinase (332 aa).

Catalysis depends on Asp223, which acts as the Proton acceptor.

Belongs to the aminoglycoside phosphotransferase family.

The catalysed reaction is hygromycin B + ATP = 7''-O-phosphohygromycin B + ADP + H(+). Functionally, the aminoglycoside phosphotransferases achieve inactivation of their antibiotic substrates by phosphorylation. The sequence is that of Hygromycin-B 7''-O-kinase (hyg) from Streptomyces hygroscopicus.